The following is a 975-amino-acid chain: Probable dipeptidyl-aminopeptidase B (975 aa).

Residues 1–20 (MAEHGHNMWEEEPSKGRDSL) show a composition bias toward basic and acidic residues. Residues 1-111 (MAEHGHNMWE…LSAASGSAGK (111 aa)) are disordered. Over 1-125 (MAEHGHNMWE…YRMMDRGLRR (125 aa)) the chain is Cytoplasmic. Over residues 22–31 (SDSSASTTSL) the composition is skewed to low complexity. Acidic residues predominate over residues 68–84 (LDDEDPLKDEASGDYDL). The helical; Signal-anchor for type II membrane protein transmembrane segment at 126 to 146 (VLIIASLVFVTAWVGGLFIYI) threads the bilayer. Residues 147–975 (SHKSYLHGSE…IDNAKPQGKR (829 aa)) lie on the Vacuolar side of the membrane. 3 N-linked (GlcNAc...) asparagine glycosylation sites follow: N207, N397, and N622. S826 functions as the Charge relay system in the catalytic mechanism. N885 carries N-linked (GlcNAc...) asparagine glycosylation. Active-site charge relay system residues include D903 and H936.

The protein belongs to the peptidase S9B family.

It localises to the vacuole membrane. It catalyses the reaction Release of an N-terminal dipeptide, Xaa-Yaa-|-Zaa-, from a polypeptide, preferentially when Yaa is Pro, provided Zaa is neither Pro nor hydroxyproline.. Its function is as follows. Type IV dipeptidyl-peptidase which removes N-terminal dipeptides sequentially from polypeptides having unsubstituted N-termini provided that the penultimate residue is proline. This Grosmannia clavigera (strain kw1407 / UAMH 11150) (Blue stain fungus) protein is Probable dipeptidyl-aminopeptidase B (DAPB).